Here is a 249-residue protein sequence, read N- to C-terminus: Diaminopimelate epimerase (249 aa).

Substrate contacts are provided by Asn-11 and Asn-60. Cys-69 (proton donor) is an active-site residue. Residues 70–71 (GN), Asn-164, and 182–183 (ER) contribute to the substrate site. The active-site Proton acceptor is Cys-192. Position 193–194 (193–194 (GT)) interacts with substrate.

Belongs to the diaminopimelate epimerase family. Homodimer.

The protein localises to the cytoplasm. It catalyses the reaction (2S,6S)-2,6-diaminopimelate = meso-2,6-diaminopimelate. It participates in amino-acid biosynthesis; L-lysine biosynthesis via DAP pathway; DL-2,6-diaminopimelate from LL-2,6-diaminopimelate: step 1/1. Functionally, catalyzes the stereoinversion of LL-2,6-diaminopimelate (L,L-DAP) to meso-diaminopimelate (meso-DAP), a precursor of L-lysine and an essential component of the bacterial peptidoglycan. The sequence is that of Diaminopimelate epimerase from Campylobacter lari (strain RM2100 / D67 / ATCC BAA-1060).